Consider the following 108-residue polypeptide: UPF0145 protein gll1048 (108 aa).

The protein belongs to the UPF0145 family.

This chain is UPF0145 protein gll1048, found in Gloeobacter violaceus (strain ATCC 29082 / PCC 7421).